The chain runs to 477 residues: tRNA-2-methylthio-N(6)-dimethylallyladenosine synthase (477 aa).

The MTTase N-terminal domain occupies 3-120 (KKLYIKTWGC…LPEMINELKG (118 aa)). 6 residues coordinate [4Fe-4S] cluster: C12, C49, C83, C157, C161, and C164. Residues 143 to 375 (RAEGPTAFVS…QQRITQQALR (233 aa)) enclose the Radical SAM core domain. The TRAM domain occupies 378–441 (RHMVGTEQRI…TNSLRGEVVR (64 aa)).

Belongs to the methylthiotransferase family. MiaB subfamily. In terms of assembly, monomer. [4Fe-4S] cluster serves as cofactor.

It localises to the cytoplasm. It catalyses the reaction N(6)-dimethylallyladenosine(37) in tRNA + (sulfur carrier)-SH + AH2 + 2 S-adenosyl-L-methionine = 2-methylsulfanyl-N(6)-dimethylallyladenosine(37) in tRNA + (sulfur carrier)-H + 5'-deoxyadenosine + L-methionine + A + S-adenosyl-L-homocysteine + 2 H(+). Catalyzes the methylthiolation of N6-(dimethylallyl)adenosine (i(6)A), leading to the formation of 2-methylthio-N6-(dimethylallyl)adenosine (ms(2)i(6)A) at position 37 in tRNAs that read codons beginning with uridine. The chain is tRNA-2-methylthio-N(6)-dimethylallyladenosine synthase from Alteromonas mediterranea (strain DSM 17117 / CIP 110805 / LMG 28347 / Deep ecotype).